The sequence spans 304 residues: Pseudouridine-5'-phosphate glycosidase (304 aa).

Catalysis depends on Glu25, which acts as the Proton donor. Substrate is bound by residues Lys88 and Val108. A Mn(2+)-binding site is contributed by Asp140. 142-144 lines the substrate pocket; the sequence is SAD. The Nucleophile role is filled by Lys161.

Belongs to the pseudouridine-5'-phosphate glycosidase family. As to quaternary structure, homotrimer. Mn(2+) serves as cofactor.

The enzyme catalyses D-ribose 5-phosphate + uracil = psi-UMP + H2O. In terms of biological role, catalyzes the reversible cleavage of pseudouridine 5'-phosphate (PsiMP) to ribose 5-phosphate and uracil. Functions biologically in the cleavage direction, as part of a pseudouridine degradation pathway. This chain is Pseudouridine-5'-phosphate glycosidase, found in Paracoccus denitrificans (strain Pd 1222).